The following is a 570-amino-acid chain: Hydroxylamine reductase (570 aa).

Cysteine 5, cysteine 8, cysteine 17, and cysteine 23 together coordinate [4Fe-4S] cluster. The hybrid [4Fe-2O-2S] cluster site is built by histidine 266, glutamate 290, cysteine 334, cysteine 425, cysteine 453, cysteine 478, glutamate 513, and lysine 515. Cysteine 425 carries the cysteine persulfide modification.

Belongs to the HCP family. It depends on [4Fe-4S] cluster as a cofactor. Requires hybrid [4Fe-2O-2S] cluster as cofactor.

It is found in the cytoplasm. It catalyses the reaction A + NH4(+) + H2O = hydroxylamine + AH2 + H(+). Its function is as follows. Catalyzes the reduction of hydroxylamine to form NH(3) and H(2)O. This is Hydroxylamine reductase from Clostridium botulinum (strain Okra / Type B1).